A 238-amino-acid polypeptide reads, in one-letter code: Fatty acid metabolism regulator protein (238 aa).

In terms of domain architecture, HTH gntR-type spans 6–74; that stretch reads KGPASFAEKY…HGKPTRVNNF (69 aa). The H-T-H motif DNA-binding region spans 34-53; that stretch reads ERELSELIGVTRTTLREVLQ.

Homodimer.

The protein localises to the cytoplasm. In terms of biological role, multifunctional regulator of fatty acid metabolism. This is Fatty acid metabolism regulator protein from Shewanella putrefaciens (strain CN-32 / ATCC BAA-453).